Here is a 276-residue protein sequence, read N- to C-terminus: Formamidopyrimidine-DNA glycosylase (276 aa).

Catalysis depends on Pro-2, which acts as the Schiff-base intermediate with DNA. Glu-3 serves as the catalytic Proton donor. The Proton donor; for beta-elimination activity role is filled by Lys-60. DNA-binding residues include Arg-113 and Arg-152. An FPG-type zinc finger spans residues 241 to 275 (NVFRKTGHPCPRCGHLIEKLIVAQRSTHICPICQK). Catalysis depends on Arg-265, which acts as the Proton donor; for delta-elimination activity.

It belongs to the FPG family. In terms of assembly, monomer. Zn(2+) is required as a cofactor.

It carries out the reaction Hydrolysis of DNA containing ring-opened 7-methylguanine residues, releasing 2,6-diamino-4-hydroxy-5-(N-methyl)formamidopyrimidine.. The catalysed reaction is 2'-deoxyribonucleotide-(2'-deoxyribose 5'-phosphate)-2'-deoxyribonucleotide-DNA = a 3'-end 2'-deoxyribonucleotide-(2,3-dehydro-2,3-deoxyribose 5'-phosphate)-DNA + a 5'-end 5'-phospho-2'-deoxyribonucleoside-DNA + H(+). Its function is as follows. Involved in base excision repair of DNA damaged by oxidation or by mutagenic agents. Acts as a DNA glycosylase that recognizes and removes damaged bases. Has a preference for oxidized purines, such as 7,8-dihydro-8-oxoguanine (8-oxoG). Has AP (apurinic/apyrimidinic) lyase activity and introduces nicks in the DNA strand. Cleaves the DNA backbone by beta-delta elimination to generate a single-strand break at the site of the removed base with both 3'- and 5'-phosphates. The chain is Formamidopyrimidine-DNA glycosylase from Protochlamydia amoebophila (strain UWE25).